Here is a 233-residue protein sequence, read N- to C-terminus: Small ribosomal subunit protein uS2c (233 aa).

It belongs to the universal ribosomal protein uS2 family.

It localises to the plastid. The protein resides in the chloroplast. The polypeptide is Small ribosomal subunit protein uS2c (rps2) (Staurastrum punctulatum (Green alga)).